Here is an 865-residue protein sequence, read N- to C-terminus: Leucine--tRNA ligase (865 aa).

Positions 48–58 match the 'HIGH' region motif; the sequence is PYPSGQLHVGH. Residues 626-630 carry the 'KMSKS' region motif; it reads KMSKS. Residue K629 participates in ATP binding.

Belongs to the class-I aminoacyl-tRNA synthetase family.

It localises to the cytoplasm. It catalyses the reaction tRNA(Leu) + L-leucine + ATP = L-leucyl-tRNA(Leu) + AMP + diphosphate. The sequence is that of Leucine--tRNA ligase from Gluconobacter oxydans (strain 621H) (Gluconobacter suboxydans).